A 957-amino-acid chain; its full sequence is MTQTLSQLENRGAFIERHIGPDAAQQQEMLNAVGAESLNALTGQIVPKDIQLATPPQVGEAATEYAALAELKAIAGRNKRFTSYIGMGYTAVQLPPVILRNMLENPGWYTAYTPYQPEVSQGRLEALLNFQQVTLDLTGLDMASASLLDEATAAAEAMAMAKRVSKLKNANRFFVASDVHPQTLDVVRTRAETFGFDVIVDDAAKALDHQDVFGVLLQQVGTTGEIHDYSALITELKSRKVVVSVAADFMALVLLMAPGKQGADIVFGSAQRFGVPMGYGGPHAAFFAAKDEFKRSMPGRIIGVSKDAAGNTALRMAMQTREQHIRREKANSNICTSQVLLANIASLYAVYHGPVGLKRIANRIHRLTDILAAGLQQKGLKLRHAHYFDTLCVEVADKAAVLARAEAAEINLRSDIHNAVGITLDETTTRENVAQLFNVLLGGSHGLNIETLDKDVALDSRSIQQSMLRDDAILTHPVFNRYHSETEMMRYMHSLERKDLALNQAMIPLGSCTMKLNAAAEMIPITWPEFAELHPFCPPEQAEGYHQMISQLSDWLVKLTGYDAVCMQPNSGAQGEYAGLLAIRHYHESRNEGHRDICLIPASAHGTNPASAHMAGMQVVVVACDKNGNIDLDDLRAKAEQHAANLSCIMVTYPSTHGVYEETIREVCEVVHQFGGQVYLDGANMNAQVGITSPGFIGADVSHLNLHKTFCIPHGGGGPGMGPIGVKAHLAPFVPGHSVVQIEGMLTRQGAVSAAPFGSASILPISWMYIRMMGAEGLKQASQVAILNANYIASRLKDAYPVLYTGRDGRVAHECILDIRPLKEETGISELDIAKRLIDYGFHAPTMSFPVAGTLMVEPTESEGKAELDRFIDAMLAIRAEIDQVKAGVWPLEDNPLVNAPHIQSELVAEWAHPYSREVAVFPAGVADKYWPTVKRLDDVYGDRNLFCSCVPISDYQ.

Lysine 708 is modified (N6-(pyridoxal phosphate)lysine).

It belongs to the GcvP family. In terms of assembly, the glycine cleavage system is composed of four proteins: P, T, L and H. Pyridoxal 5'-phosphate serves as cofactor.

It catalyses the reaction N(6)-[(R)-lipoyl]-L-lysyl-[glycine-cleavage complex H protein] + glycine + H(+) = N(6)-[(R)-S(8)-aminomethyldihydrolipoyl]-L-lysyl-[glycine-cleavage complex H protein] + CO2. The glycine cleavage system catalyzes the degradation of glycine. The P protein binds the alpha-amino group of glycine through its pyridoxal phosphate cofactor; CO(2) is released and the remaining methylamine moiety is then transferred to the lipoamide cofactor of the H protein. This is Glycine dehydrogenase (decarboxylating) from Salmonella heidelberg (strain SL476).